The primary structure comprises 466 residues: Glutamate--tRNA ligase 1 (466 aa).

The 'HIGH' region signature appears at 9 to 19 (PSPTGYLHIGG). 4 residues coordinate Zn(2+): C98, C100, C125, and E127. A 'KMSKS' region motif is present at residues 236–240 (KLSKR). Position 239 (K239) interacts with ATP.

It belongs to the class-I aminoacyl-tRNA synthetase family. Glutamate--tRNA ligase type 1 subfamily. In terms of assembly, monomer. Zn(2+) is required as a cofactor.

Its subcellular location is the cytoplasm. It catalyses the reaction tRNA(Glu) + L-glutamate + ATP = L-glutamyl-tRNA(Glu) + AMP + diphosphate. Functionally, catalyzes the attachment of glutamate to tRNA(Glu) in a two-step reaction: glutamate is first activated by ATP to form Glu-AMP and then transferred to the acceptor end of tRNA(Glu). The protein is Glutamate--tRNA ligase 1 of Acidithiobacillus ferrooxidans (strain ATCC 53993 / BNL-5-31) (Leptospirillum ferrooxidans (ATCC 53993)).